A 407-amino-acid chain; its full sequence is UDP-N-acetylglucosamine--N-acetylmuramyl-(pentapeptide) pyrophosphoryl-undecaprenol N-acetylglucosamine transferase (407 aa).

The tract at residues 1–21 is disordered; that stretch reads MNNSVREPTRGRRGSPPVADA. UDP-N-acetyl-alpha-D-glucosamine-binding positions include 38-40, Asn-157, Ser-228, and Gln-324; that span reads TAG.

It belongs to the glycosyltransferase 28 family. MurG subfamily.

It localises to the cell membrane. It carries out the reaction di-trans,octa-cis-undecaprenyl diphospho-N-acetyl-alpha-D-muramoyl-L-alanyl-D-glutamyl-meso-2,6-diaminopimeloyl-D-alanyl-D-alanine + UDP-N-acetyl-alpha-D-glucosamine = di-trans,octa-cis-undecaprenyl diphospho-[N-acetyl-alpha-D-glucosaminyl-(1-&gt;4)]-N-acetyl-alpha-D-muramoyl-L-alanyl-D-glutamyl-meso-2,6-diaminopimeloyl-D-alanyl-D-alanine + UDP + H(+). The protein operates within cell wall biogenesis; peptidoglycan biosynthesis. In terms of biological role, cell wall formation. Catalyzes the transfer of a GlcNAc subunit on undecaprenyl-pyrophosphoryl-MurNAc-pentapeptide (lipid intermediate I) to form undecaprenyl-pyrophosphoryl-MurNAc-(pentapeptide)GlcNAc (lipid intermediate II). The protein is UDP-N-acetylglucosamine--N-acetylmuramyl-(pentapeptide) pyrophosphoryl-undecaprenol N-acetylglucosamine transferase of Mycobacterium leprae (strain TN).